Reading from the N-terminus, the 855-residue chain is Pre-mRNA-splicing factor SYF1 (855 aa).

HAT repeat units follow at residues 15-47 (LVFE…FKQG), 48-80 (APKP…ARRA), 90-122 (PAYE…FLMD), 124-158 (GRVT…FLRS), 160-192 (PLPE…SSDR), 198-230 (QRLA…LISQ), 235-268 (VQSL…YYIR), 270-305 (GHFE…FEES), and 369-407 (GRPR…FYED). Lys-420 carries the N6-acetyllysine modification. 5 HAT repeats span residues 498–530 (GTFQ…FLEE), 532–566 (KYFE…KFIS), 571–605 (RKLE…LEEE), 643–677 (YGVT…MECK), and 679–713 (GEID…FEVR). Residues 808-855 (AELAQQANPEEIQLGEDEDEDEMDLEPNEVRLEQQSVPAAVFGSLKED) are disordered. Positions 820–834 (QLGEDEDEDEMDLEP) are enriched in acidic residues. Residue Ser-851 is modified to Phosphoserine.

This sequence belongs to the crooked-neck family. Associates with RNA polymerase II, the TCR-specific proteins CKN1/CSA and ERCC6/CSB, and XPA. Identified in the spliceosome C complex. Component of the XAB2 complex, a multimeric protein complex composed of XAB2, PRPF19, AQR, ZNF830, ISY1, and PPIE. Identified in a pentameric intron-binding (IB) complex composed of AQR, XAB2, ISY1, ZNF830 and PPIE that is incorporated into the spliceosome as a preassembled complex. The IB complex does not contain PRPF19.

The protein resides in the nucleus. Involved in pre-mRNA splicing as component of the spliceosome. Involved in transcription-coupled repair (TCR), transcription and pre-mRNA splicing. This chain is Pre-mRNA-splicing factor SYF1 (Xab2), found in Mus musculus (Mouse).